The primary structure comprises 93 residues: Protein E7 (93 aa).

The E7 terminal domain stretch occupies residues 1–43 (MIGKEATIPEVVLELQELVQPTADLHCYEELTEEPAEEEQCLT). The LXCXE motif; interaction with host RB1 and TMEM173/STING signature appears at 25–29 (LHCYE). The segment at 51 to 86 (CGCGARLRLYVLATNLGIRAQQELLLGDIQLVCPEC) is a zinc-finger region. A Nuclear export signal motif is present at residues 68 to 76 (IRAQQELLL).

It belongs to the papillomaviridae E7 protein family. Homodimer. Homooligomer. Interacts with host RB1; this interaction induces dissociation of RB1-E2F1 complex thereby disrupting RB1 activity. Interacts with host EP300; this interaction represses EP300 transcriptional activity. Interacts with protein E2; this interaction inhibits E7 oncogenic activity. Interacts with host TMEM173/STING; this interaction impairs the ability of TMEM173/STING to sense cytosolic DNA and promote the production of type I interferon (IFN-alpha and IFN-beta). Highly phosphorylated.

Its subcellular location is the host cytoplasm. It is found in the host nucleus. Plays a role in viral genome replication by driving entry of quiescent cells into the cell cycle. Stimulation of progression from G1 to S phase allows the virus to efficiently use the cellular DNA replicating machinery to achieve viral genome replication. E7 protein has both transforming and trans-activating activities. Induces the disassembly of the E2F1 transcription factor from RB1, with subsequent transcriptional activation of E2F1-regulated S-phase genes. Interferes with host histone deacetylation mediated by HDAC1 and HDAC2, leading to transcription activation. Also plays a role in the inhibition of both antiviral and antiproliferative functions of host interferon alpha. Interaction with host TMEM173/STING impairs the ability of TMEM173/STING to sense cytosolic DNA and promote the production of type I interferon (IFN-alpha and IFN-beta). The sequence is that of Protein E7 from Human papillomavirus 9.